Consider the following 410-residue polypeptide: Chitinase-3-like protein 1 (410 aa).

Residues 1–48 (MGVKAAQTGIWASQGQSIRVVGFQAQTAHRAICLLGFVVLVLLQCCSA) form the signal peptide. In terms of domain architecture, GH18 spans 49 to 410 (YKLVCYYTSW…NAIKDALAAT (362 aa)). Cysteines 53 and 78 form a disulfide. An N-linked (GlcNAc...) asparagine glycan is attached at Asn87. Residues 97-98 (EW), 124-127 (GGWN), Tyr168, 231-234 (MTYD), and Arg290 contribute to the chitin site. An intrachain disulfide couples Cys327 to Cys391. An important for AKT1 activation and IL8 production region spans residues 351–365 (QWVGYDDQESVKSKV). Trp379 serves as a coordination point for chitin.

Belongs to the glycosyl hydrolase 18 family. In terms of assembly, monomer.

It localises to the secreted. The protein resides in the extracellular space. Its subcellular location is the cytoplasm. The protein localises to the perinuclear region. It is found in the endoplasmic reticulum. In terms of biological role, carbohydrate-binding lectin with a preference for chitin. Has no chitinase activity. May play a role in tissue remodeling and in the capacity of cells to respond to and cope with changes in their environment. Plays a role in T-helper cell type 2 (Th2) inflammatory response and IL-13-induced inflammation, regulating allergen sensitization, inflammatory cell apoptosis, dendritic cell accumulation and M2 macrophage differentiation. Facilitates invasion of pathogenic enteric bacteria into colonic mucosa and lymphoid organs. Mediates activation of AKT1 signaling pathway and subsequent IL8 production in colonic epithelial cells. Regulates antibacterial responses in lung by contributing to macrophage bacterial killing, controlling bacterial dissemination and augmenting host tolerance. Also regulates hyperoxia-induced injury, inflammation and epithelial apoptosis in lung. In Pongo abelii (Sumatran orangutan), this protein is Chitinase-3-like protein 1 (CHI3L1).